We begin with the raw amino-acid sequence, 644 residues long: 1-deoxy-D-xylulose-5-phosphate synthase (644 aa).

Residues histidine 78 and glycine 120 to alanine 122 contribute to the thiamine diphosphate site. Aspartate 150 provides a ligand contact to Mg(2+). Residues alanine 151–alanine 152, asparagine 179, and glutamate 374 contribute to the thiamine diphosphate site. Asparagine 179 contacts Mg(2+).

This sequence belongs to the transketolase family. DXPS subfamily. As to quaternary structure, homodimer. Requires Mg(2+) as cofactor. Thiamine diphosphate is required as a cofactor.

It catalyses the reaction D-glyceraldehyde 3-phosphate + pyruvate + H(+) = 1-deoxy-D-xylulose 5-phosphate + CO2. It participates in metabolic intermediate biosynthesis; 1-deoxy-D-xylulose 5-phosphate biosynthesis; 1-deoxy-D-xylulose 5-phosphate from D-glyceraldehyde 3-phosphate and pyruvate: step 1/1. Functionally, catalyzes the acyloin condensation reaction between C atoms 2 and 3 of pyruvate and glyceraldehyde 3-phosphate to yield 1-deoxy-D-xylulose-5-phosphate (DXP). The chain is 1-deoxy-D-xylulose-5-phosphate synthase from Chlamydia pneumoniae (Chlamydophila pneumoniae).